Reading from the N-terminus, the 107-residue chain is Iron-binding protein IscA (107 aa).

The Fe cation site is built by Cys35, Cys99, and Cys101.

The protein belongs to the HesB/IscA family. Homodimer; may form tetramers and higher multimers. Fe cation is required as a cofactor.

Its function is as follows. Is able to transfer iron-sulfur clusters to apo-ferredoxin. Multiple cycles of [2Fe2S] cluster formation and transfer are observed, suggesting that IscA acts catalytically. Recruits intracellular free iron so as to provide iron for the assembly of transient iron-sulfur cluster in IscU in the presence of IscS, L-cysteine and the thioredoxin reductase system TrxA/TrxB. This Salmonella newport (strain SL254) protein is Iron-binding protein IscA.